A 162-amino-acid polypeptide reads, in one-letter code: Probable chemoreceptor glutamine deamidase CheD (162 aa).

This sequence belongs to the CheD family.

It catalyses the reaction L-glutaminyl-[protein] + H2O = L-glutamyl-[protein] + NH4(+). Functionally, probably deamidates glutamine residues to glutamate on methyl-accepting chemotaxis receptors (MCPs), playing an important role in chemotaxis. The protein is Probable chemoreceptor glutamine deamidase CheD of Clostridium kluyveri (strain ATCC 8527 / DSM 555 / NBRC 12016 / NCIMB 10680 / K1).